The sequence spans 614 residues: Replication protein A 70 kDa DNA-binding subunit (614 aa).

The interval 112–178 (GNPVPYNEGQ…SSVKTPGGTQ (67 aa)) is disordered. Composition is skewed to polar residues over residues 120-130 (GQGQQRSSAPT) and 158-178 (PSNQFSKASAPSSVKTPGGTQ). The segment at residues 194-278 (WTICARVTQK…VKNDYEITFN (85 aa)) is a DNA-binding region (OB). The segment at 478–500 (CPSQDCNKKVIDQQNGLYRCEKC) adopts a C4-type zinc-finger fold.

The protein belongs to the replication factor A protein 1 family. In terms of assembly, component of the heterotrimeric canonical replication protein A complex (RPA).

The protein resides in the nucleus. It is found in the PML body. In terms of biological role, as part of the heterotrimeric replication protein A complex (RPA/RP-A), binds and stabilizes single-stranded DNA intermediates, that form during DNA replication or upon DNA stress. It prevents their reannealing and in parallel, recruits and activates different proteins and complexes involved in DNA metabolism. Thereby, it plays an essential role both in DNA replication and the cellular response to DNA damage. The polypeptide is Replication protein A 70 kDa DNA-binding subunit (RPA1) (Gallus gallus (Chicken)).